Here is a 433-residue protein sequence, read N- to C-terminus: Histidinol dehydrogenase homolog (433 aa).

The Zn(2+) site is built by Gln249 and His252. Catalysis depends on proton acceptor residues Glu319 and His320. Zn(2+) contacts are provided by Asp353 and His412.

The protein belongs to the histidinol dehydrogenase family. Requires Zn(2+) as cofactor.

The polypeptide is Histidinol dehydrogenase homolog (Ruegeria pomeroyi (strain ATCC 700808 / DSM 15171 / DSS-3) (Silicibacter pomeroyi)).